A 271-amino-acid polypeptide reads, in one-letter code: Orotidine 5'-phosphate decarboxylase (271 aa).

Residue lysine 95 is the Proton donor of the active site.

This sequence belongs to the OMP decarboxylase family. Type 2 subfamily.

The catalysed reaction is orotidine 5'-phosphate + H(+) = UMP + CO2. The protein operates within pyrimidine metabolism; UMP biosynthesis via de novo pathway; UMP from orotate: step 2/2. In Aromatoleum aromaticum (strain DSM 19018 / LMG 30748 / EbN1) (Azoarcus sp. (strain EbN1)), this protein is Orotidine 5'-phosphate decarboxylase.